Reading from the N-terminus, the 83-residue chain is Consomatin Rs1 (83 aa).

An N-terminal signal peptide occupies residues 1–22; that stretch reads MQTAYWVMVMMMVWITAPLSEG. A propeptide spanning residues 23–55 is cleaved from the precursor; the sequence is GKLNNVIRGLVPDDVTPKRISQSLISRRRFDSR. The cysteines at positions 62 and 67 are disulfide-linked. D-tryptophan is present on Trp-64. Pro-68 is modified (4-hydroxyproline). A propeptide spanning residues 71 to 83 is cleaved from the precursor; sequence LHGDNYDLKEKDK.

Belongs to the conotoxin C superfamily. Consomatin family. As to expression, expressed by the venom duct.

The protein localises to the secreted. Its function is as follows. Moderately activates human somatostatin receptors (SSTR) with a preferential activation of SSTR1 and SSTR4. In vivo, does not cause behavioral changes in mice within a few minutes of intracranial injection, but causes a progressive loss of movement thereafter. Four to five hours after injection, mice recover, even with the highest dose tested. Shows antinociception and antihyperalgesia activities in two mouse models of acute pain, most probably by acting outside the central nervous system. This chain is Consomatin Rs1, found in Conus raulsilvai (Sea snail).